An 85-amino-acid polypeptide reads, in one-letter code: NAD(P)H-quinone oxidoreductase subunit O (85 aa).

It belongs to the complex I NdhO subunit family. As to quaternary structure, NDH-1 can be composed of about 15 different subunits; different subcomplexes with different compositions have been identified which probably have different functions.

The protein resides in the cellular thylakoid membrane. The enzyme catalyses a plastoquinone + NADH + (n+1) H(+)(in) = a plastoquinol + NAD(+) + n H(+)(out). It carries out the reaction a plastoquinone + NADPH + (n+1) H(+)(in) = a plastoquinol + NADP(+) + n H(+)(out). Functionally, NDH-1 shuttles electrons from an unknown electron donor, via FMN and iron-sulfur (Fe-S) centers, to quinones in the respiratory and/or the photosynthetic chain. The immediate electron acceptor for the enzyme in this species is believed to be plastoquinone. Couples the redox reaction to proton translocation, and thus conserves the redox energy in a proton gradient. Cyanobacterial NDH-1 also plays a role in inorganic carbon-concentration. The protein is NAD(P)H-quinone oxidoreductase subunit O of Synechococcus sp. (strain CC9311).